Reading from the N-terminus, the 821-residue chain is BDNF/NT-3 growth factors receptor (821 aa).

Residues 1–31 (MSPWLKWHGPAMARLWGLCLLVLGFWRASLA) form the signal peptide. 2 disulfides stabilise this stretch: Cys32–Cys38 and Cys36–Cys45. Residues 32-61 (CPTSCKCSSARIWCTEPSPGIVAFPRLEPN) form the LRRNT domain. At 32–429 (CPTSCKCSSA…DVADQSNREH (398 aa)) the chain is on the extracellular side. 3 N-linked (GlcNAc...) asparagine glycosylation sites follow: Asn67, Asn95, and Asn121. 2 LRR repeats span residues 92–113 (GLRN…AFLK) and 116–137 (NLRH…HFRH). Residues 148–196 (NPFTCSCDIMWLKTLQETKSSPDTQDLYCLNESSKNMPLANLQIPNCGL) enclose the LRRCT domain. 2 disulfides stabilise this stretch: Cys152-Cys176 and Cys154-Cys194. N-linked (GlcNAc...) asparagine glycans are attached at residues Asn178, Asn205, Asn241, Asn254, Asn280, Asn325, Asn338, Asn350, and Asn411. 2 consecutive Ig-like C2-type domains span residues 197-282 (PSAR…VNLT) and 301-365 (WCIP…MAKN). Cys218 and Cys266 form a disulfide bridge. Cysteines 302 and 345 form a disulfide. The helical transmembrane segment at 430 to 453 (LSVYAVVVIASVVGFCLLVMLLLL) threads the bilayer. Positions 454-465 (KLARHSKFGMKG) are interaction with MAPK8IP3/JIP3. Over 454–821 (KLARHSKFGM…ASPVYLDILG (368 aa)) the chain is Cytoplasmic. Residues 474–497 (DDSASPLHHISNGSNTPSSSEGGP) are disordered. The span at 484 to 494 (SNGSNTPSSSE) shows a compositional bias: polar residues. Tyr515 is subject to Phosphotyrosine. The Protein kinase domain maps to 537 to 806 (IVLKRELGEG…KNIKSIHTLL (270 aa)). ATP-binding positions include 543 to 551 (LGEGAFGKV) and Lys571. Asp675 (proton acceptor) is an active-site residue. 4 positions are modified to phosphotyrosine; by autocatalysis: Tyr701, Tyr705, Tyr706, and Tyr816.

Belongs to the protein kinase superfamily. Tyr protein kinase family. Insulin receptor subfamily. As to quaternary structure, exists in a dynamic equilibrium between monomeric (low affinity) and dimeric (high affinity) structures. Interacts (phosphorylated upon activation by BDNF) with SHC1; mediates SHC1 phosphorylation and activation. Interacts (phosphorylated upon activation by BDNF) with PLCG1 and/or PLCG2; mediates PLCG1 phosphorylation and activation. Interacts with SH2B1 and SH2B2. Interacts with NGFR; may regulate the ligand specificity of the receptor. Interacts with SORCS2; this interaction is important for normal targeting to post-synaptic densities in response to high-frequency stimulation. Interacts (phosphorylated upon ligand-binding) with SH2D1A; regulates NTRK2. Interacts with SQSTM1 and KIDINS220. Interacts (phosphorylated upon ligand-binding) with FRS2; activates the MAPK signaling pathway. Interacts with APPL1. Interacts with MAPK8IP3/JIP3 and KLC1; interaction with KLC1 is mediated by MAPK8IP3/JIP3. Interacts with SORL1; this interaction facilitates NTRK2 trafficking between synaptic plasma membranes, postsynaptic densities and cell soma, hence positively regulates BDNF signaling. Interacts with SLITRK2. Post-translationally, phosphorylated. Undergoes ligand-mediated autophosphorylation that is required for interaction with SHC1 and PLCG1 and other downstream effectors. Some isoforms are not phosphorylated. Ubiquitinated. Undergoes polyubiquitination upon activation; regulated by NGFR. Ubiquitination regulates the internalization of the receptor. As to expression, expressed in the brain, in neurons (at protein level). Detected in hippocampus (at protein level). Widely expressed in the central and peripheral nervous system. The different forms are differentially expressed in various cell types. Isoform GP95-TRKB is specifically expressed in glial cells.

The protein resides in the cell membrane. It localises to the endosome membrane. The protein localises to the early endosome membrane. It is found in the cell projection. Its subcellular location is the axon. The protein resides in the dendrite. It localises to the cytoplasm. The protein localises to the perinuclear region. It is found in the postsynaptic density. The enzyme catalyses L-tyrosyl-[protein] + ATP = O-phospho-L-tyrosyl-[protein] + ADP + H(+). The formation of active receptors dimers able to fully transduce the ligand-mediated signal, may be negatively regulated by the formation of inactive heterodimers with the non-catalytic isoforms. The neuronal activity and the influx of calcium positively regulate the kinase activity and the internalization of the receptor which are both important for active signaling. Regulated by NGFR that may control the internalization of the receptor. NGFR may also stimulate the activation by BDNF compared to NTF3 and NTF4. SH2D1A inhibits the autophosphorylation of the receptor, and alters the recruitment and activation of downstream effectors and signaling cascades. In terms of biological role, receptor tyrosine kinase involved in the development and the maturation of the central and the peripheral nervous systems through regulation of neuron survival, proliferation, migration, differentiation, and synapse formation and plasticity. Receptor for BDNF/brain-derived neurotrophic factor and NTF4/neurotrophin-4. Alternatively can also bind NTF3/neurotrophin-3 which is less efficient in activating the receptor but regulates neuron survival through NTRK2. Upon ligand-binding, undergoes homodimerization, autophosphorylation and activation. Recruits, phosphorylates and/or activates several downstream effectors including SHC1, FRS2, SH2B1, SH2B2 and PLCG1 that regulate distinct overlapping signaling cascades. Through SHC1, FRS2, SH2B1, SH2B2 activates the GRB2-Ras-MAPK cascade that regulates for instance neuronal differentiation including neurite outgrowth. Through the same effectors controls the Ras-PI3 kinase-AKT1 signaling cascade that mainly regulates growth and survival. Through PLCG1 and the downstream protein kinase C-regulated pathways controls synaptic plasticity. Thereby, plays a role in learning and memory by regulating both short term synaptic function and long-term potentiation. PLCG1 also leads to NF-Kappa-B activation and the transcription of genes involved in cell survival. Hence, it is able to suppress anoikis, the apoptosis resulting from loss of cell-matrix interactions. Isoform GP95-TRKB may also play a role in neutrophin-dependent calcium signaling in glial cells and mediate communication between neurons and glia. This chain is BDNF/NT-3 growth factors receptor, found in Mus musculus (Mouse).